The sequence spans 218 residues: Small ribosomal subunit protein uS3 (218 aa).

Residues 38 to 107 form the KH type-2 domain; it reads VREYIEKRLK…RVHVNVVEVK (70 aa).

Belongs to the universal ribosomal protein uS3 family. Part of the 30S ribosomal subunit. Forms a tight complex with proteins S10 and S14.

Its function is as follows. Binds the lower part of the 30S subunit head. Binds mRNA in the 70S ribosome, positioning it for translation. The chain is Small ribosomal subunit protein uS3 from Exiguobacterium sibiricum (strain DSM 17290 / CCUG 55495 / CIP 109462 / JCM 13490 / 255-15).